The chain runs to 97 residues: Putative septation protein SpoVG (97 aa).

This sequence belongs to the SpoVG family.

In terms of biological role, essential for sporulation. Interferes with or is a negative regulator of the pathway leading to asymmetric septation. In Bacillus cytotoxicus (strain DSM 22905 / CIP 110041 / 391-98 / NVH 391-98), this protein is Putative septation protein SpoVG.